A 694-amino-acid chain; its full sequence is Lamina-associated polypeptide 2, isoform alpha (694 aa).

Positions 5 to 48 (LEDPSVLTKDKLKSELVANNVTLPAGEQRKDVYVQLYLQHLTAR) constitute an LEM-like domain. Disordered stretches follow at residues 47 to 117 (ARNR…ELTN) and 150 to 209 (REQG…FSEL). Residues 49-108 (NRPPLPAGTNSKGPPDFSSDEEREPTPVLGSGAAAAGRSRAAVGRKATKKTDKPRQEDKD) are linker. Residue T57 is modified to Phosphothreonine. Residues S59, S66, and S67 each carry the phosphoserine modification. Residue T74 is modified to Phosphothreonine. Over residues 78-93 (GSGAAAAGRSRAAVGR) the composition is skewed to low complexity. The residue at position 79 (S79) is a Phosphoserine. An omega-N-methylarginine mark is found at R86 and R88. The segment covering 97-106 (KKTDKPRQED) has biased composition (basic and acidic residues). Positions 107-117 (KDDLDVTELTN) are enriched in acidic residues. The LEM domain maps to 109 to 153 (DLDVTELTNEDLLDQLVKYGVNPGPIVGTTRKLYEKKLLKLREQG). T154 is subject to Phosphothreonine. Residues 155-178 (ESRSSTPLPTISSSAENTRQNGSN) show a composition bias toward polar residues. Residues S156 and S159 each carry the phosphoserine modification. Residues T160 and T164 each carry the phosphothreonine modification. Phosphoserine is present on residues S166 and S168. A compositionally biased stretch (basic and acidic residues) spans 179-191 (DSDRYSDNEEGKK). The Nuclear localization signal motif lies at 190-196 (KKKEHKK). Residues S272, S312, S351, S354, S370, and S424 each carry the phosphoserine modification. The tract at residues 338-368 (QPLCPERSHISDQSPLSSKRKALEESESSQL) is disordered. Residues 558 to 657 (TESCNQQLDL…VGRRYLWLKD (100 aa)) adopt a coiled-coil conformation. K656 is subject to N6-acetyllysine.

Belongs to the LEM family. Interacts with LMNA, BANF1 and RB1 and with chromosomes. Associates directly or indirectly with lamins at specific cell-cycle stages. Interacts with CMTM6. Phosphorylated in a mitose-specific manner. As to expression, expressed in many tissues. Most abundant in adult thymus and fetal liver.

It localises to the nucleus. Its subcellular location is the chromosome. In terms of biological role, may be involved in the structural organization of the nucleus and in the post-mitotic nuclear assembly. Plays an important role, together with LMNA, in the nuclear anchorage of RB1. TP and TP5 may play a role in T-cell development and function. TP5 is an immunomodulating pentapeptide. In Homo sapiens (Human), this protein is Lamina-associated polypeptide 2, isoform alpha (TMPO).